Consider the following 163-residue polypeptide: Lipoprotein signal peptidase (163 aa).

The next 4 helical transmembrane spans lie at 9–29 (AWPWLWFSVLVILLDQLSKYL), 42–62 (ILPFLNFTLNYNTGAAFSFLG), 67–87 (WQIIFFAAISFVVSIFLILWL), and 93–113 (SEIMMSLGLSLIIGGALGNFI). Active-site residues include aspartate 123 and aspartate 141. Residues 137-157 (FNVADSAICVGVFLLIVHMLL) form a helical membrane-spanning segment.

Belongs to the peptidase A8 family.

It localises to the cell inner membrane. It catalyses the reaction Release of signal peptides from bacterial membrane prolipoproteins. Hydrolyzes -Xaa-Yaa-Zaa-|-(S,diacylglyceryl)Cys-, in which Xaa is hydrophobic (preferably Leu), and Yaa (Ala or Ser) and Zaa (Gly or Ala) have small, neutral side chains.. It participates in protein modification; lipoprotein biosynthesis (signal peptide cleavage). In terms of biological role, this protein specifically catalyzes the removal of signal peptides from prolipoproteins. This is Lipoprotein signal peptidase from Coxiella burnetii (strain RSA 331 / Henzerling II).